A 726-amino-acid chain; its full sequence is Fatty acid oxidation complex subunit alpha (726 aa).

The tract at residues Met1–Ser189 is enoyl-CoA hydratase/isomerase. Residue Asp296 participates in substrate binding. Positions Glu311–Val726 are 3-hydroxyacyl-CoA dehydrogenase. NAD(+) is bound by residues Met324, Asp343, Val400–Glu402, Lys407, and Ser429. His450 functions as the For 3-hydroxyacyl-CoA dehydrogenase activity in the catalytic mechanism. Asn453 contacts NAD(+). Substrate is bound by residues Asn500 and Tyr660.

This sequence in the N-terminal section; belongs to the enoyl-CoA hydratase/isomerase family. The protein in the C-terminal section; belongs to the 3-hydroxyacyl-CoA dehydrogenase family. In terms of assembly, heterotetramer of two alpha chains (FadB) and two beta chains (FadA).

It carries out the reaction a (3S)-3-hydroxyacyl-CoA + NAD(+) = a 3-oxoacyl-CoA + NADH + H(+). The enzyme catalyses a (3S)-3-hydroxyacyl-CoA = a (2E)-enoyl-CoA + H2O. The catalysed reaction is a 4-saturated-(3S)-3-hydroxyacyl-CoA = a (3E)-enoyl-CoA + H2O. It catalyses the reaction (3S)-3-hydroxybutanoyl-CoA = (3R)-3-hydroxybutanoyl-CoA. It carries out the reaction a (3Z)-enoyl-CoA = a 4-saturated (2E)-enoyl-CoA. The enzyme catalyses a (3E)-enoyl-CoA = a 4-saturated (2E)-enoyl-CoA. It participates in lipid metabolism; fatty acid beta-oxidation. Involved in the aerobic and anaerobic degradation of long-chain fatty acids via beta-oxidation cycle. Catalyzes the formation of 3-oxoacyl-CoA from enoyl-CoA via L-3-hydroxyacyl-CoA. It can also use D-3-hydroxyacyl-CoA and cis-3-enoyl-CoA as substrate. The polypeptide is Fatty acid oxidation complex subunit alpha (Aliivibrio salmonicida (strain LFI1238) (Vibrio salmonicida (strain LFI1238))).